The sequence spans 511 residues: MLLLWLYQALPTSLTRILLTAGLCVPCALVIHGIYNLYFHPLRNVPGPKLGALTDLYAFYWNWIRGVGYSKQFDRWHKHYNSSVIRIGPNDVHTTQVELYDVIHKAGSTWLKDKSFYKHFGGLDAMIDPREYRTYRTHLAPLYSQRAVDGLVSKMDDDLAICGQKTTKMAENGKAVNMARVLTTLSTSMILYNLFSMDISLWECNDYHPFLEAFEHIMAQIWLFLSYPRLATCLSLIPGTSLARLAPSWTTFMNSCAAWCDEDARKQRASDDQSIRDSHSKRYYALKHTDANDKKSIIPAPLDELFSFIAGGTDTTAYTTGCAFFYILSSPSVCRKLVKELDENASFIRNGLDYHKIQTLPYLNAVIKETLRISVPVPGCLPRVVPEGGITVGSFHLPAGTALSITQQAISLNQDIFPSPLCFSPERWIGPAAAGLDKWNVAFGRGSRQCIGTTLAYLELRCVVAYFFSRFDMTLTAKNGDGHRWVDRFVAVNLDTVEVLVLSDRWSGARY.

A helical membrane pass occupies residues 17–37 (ILLTAGLCVPCALVIHGIYNL). N81 and N344 each carry an N-linked (GlcNAc...) asparagine glycan. Heme is bound at residue C450.

Belongs to the cytochrome P450 family. It depends on heme as a cofactor.

It is found in the membrane. In terms of biological role, inactive cytochrome P450 monooxygenase; part of the gene cluster that mediates the biosynthesis of fungal ergot alkaloid. DmaW catalyzes the first step of ergot alkaloid biosynthesis by condensing dimethylallyl diphosphate (DMAP) and tryptophan to form 4-dimethylallyl-L-tryptophan. The second step is catalyzed by the methyltransferase easF that methylates 4-dimethylallyl-L-tryptophan in the presence of S-adenosyl-L-methionine, resulting in the formation of 4-dimethylallyl-L-abrine. The catalase easC and the FAD-dependent oxidoreductase easE then transform 4-dimethylallyl-L-abrine to chanoclavine-I which is further oxidized by easD in the presence of NAD(+), resulting in the formation of chanoclavine-I aldehyde. Agroclavine dehydrogenase easG then mediates the conversion of chanoclavine-I aldehyde to agroclavine via a non-enzymatic adduct reaction: the substrate is an iminium intermediate that is formed spontaneously from chanoclavine-I aldehyde in the presence of glutathione. Further conversion of agroclavine to paspalic acid is a two-step process involving oxidation of agroclavine to elymoclavine and of elymoclavine to paspalic acid, the second step being performed by the elymoclavine oxidase cloA. However, cloA does not encode a functional enzyme indicating that C.fusiformis terminates its ergot alkaloid pathway at elymoclavine. The polypeptide is Inactive cytochrome P450 monooxygenase cloA (Claviceps fusiformis (Ergot fungus)).